We begin with the raw amino-acid sequence, 25 residues long: Large ribosomal subunit protein uL30 (25 aa).

This sequence belongs to the universal ribosomal protein uL30 family. In terms of assembly, part of the 50S ribosomal subunit.

This chain is Large ribosomal subunit protein uL30 (rpmD), found in Pseudomonas fluorescens biotype A.